Reading from the N-terminus, the 250-residue chain is Vacuolar iron transporter 1 (250 aa).

At 1-37 (MSSEEDKITRISIEPEKQTLLDHHTEKHFTAGEIVRD) the chain is on the cytoplasmic side. Residues 38–58 (IIIGVSDGLTVPFALAAGLSG) traverse the membrane as a helical segment. Residues 59–64 (ANASSS) are Vacuolar-facing. The chain crosses the membrane as a helical span at residues 65 to 85 (IVLTAGIAEVAAGAISMGLGG). At 86 to 169 (YLAAKSEEDH…PDPKRALQSA (84 aa)) the chain is on the cytoplasmic side. Residues 91–166 (SEEDHYAREM…LEKPDPKRAL (76 aa)) form a cytoplasmic metal binding domain (MBD) region. 6 residues coordinate Fe cation: Glu-103, Glu-106, Glu-114, Glu-117, Met-150, and Glu-154. Residues 170-190 (FTIAIAYVLGGFIPLLPYMLI) traverse the membrane as a helical segment. Residues 191–192 (PH) lie on the Vacuolar side of the membrane. The helical transmembrane segment at 193-213 (AMDAVVASVVITLFALFIFGY) threads the bilayer. Over 214 to 227 (AKGHFTGSKPLRSA) the chain is Cytoplasmic. The helical transmembrane segment at 228–248 (FETAFIGAIASAAAFCLAKVV) threads the bilayer. Over 249–250 (QH) the chain is Vacuolar.

Belongs to the CCC1 family. Homodimer. The dimeric interaction is mediated by both the transmembrane domains (TMDs) and the cytoplasmic metal binding domain (MBD). In terms of tissue distribution, highly expressed in developing embryo and seed. Expressed in young seedlings, predominantly in the vasculature.

The protein resides in the vacuole membrane. It carries out the reaction Fe(2+)(in) = Fe(2+)(out). Functionally, vacuolar iron transporter involved in the transfer of iron ions from the cytosol to the vacuole for intracellular iron storage. Involved in regulation of cellular iron homeostasis. Vacuolar iron storage is required for seed embryo and seedling development. This chain is Vacuolar iron transporter 1, found in Arabidopsis thaliana (Mouse-ear cress).